Consider the following 605-residue polypeptide: FAD-linked oxidoreductase easE (605 aa).

Positions 1–20 are cleaved as a signal peptide; sequence MRHFVTFVVGFLLSWGFLSS. N-linked (GlcNAc...) asparagine glycans are attached at residues Asn-46 and Asn-105. The region spanning 122–307 is the FAD-binding PCMH-type domain; the sequence is CHQGRLPLYS…TQATVRAFPD (186 aa). Residue Asn-370 is glycosylated (N-linked (GlcNAc...) asparagine).

It belongs to the oxygen-dependent FAD-linked oxidoreductase family. It depends on FAD as a cofactor.

It participates in alkaloid biosynthesis; ergot alkaloid biosynthesis. In terms of biological role, FAD-linked oxidoreductase; part of the gene cluster that mediates the biosynthesis of fungal ergot alkaloid ergovaline, the predominant ergopeptine product in E.festucae var. lolii. DmaW catalyzes the first step of ergot alkaloid biosynthesis by condensing dimethylallyl diphosphate (DMAP) and tryptophan to form 4-dimethylallyl-L-tryptophan. The second step is catalyzed by the methyltransferase easF that methylates 4-dimethylallyl-L-tryptophan in the presence of S-adenosyl-L-methionine, resulting in the formation of 4-dimethylallyl-L-abrine. The catalase easC and the FAD-dependent oxidoreductase easE then transform 4-dimethylallyl-L-abrine to chanoclavine-I which is further oxidized by easD in the presence of NAD(+), resulting in the formation of chanoclavine-I aldehyde. Agroclavine dehydrogenase easG then mediates the conversion of chanoclavine-I aldehyde to agroclavine via a non-enzymatic adduct reaction: the substrate is an iminium intermediate that is formed spontaneously from chanoclavine-I aldehyde in the presence of glutathione. The presence of easA is not required to complete this reaction. Further conversion of agroclavine to paspalic acid is a two-step process involving oxidation of agroclavine to elymoclavine and of elymoclavine to paspalic acid, the second step being performed by the elymoclavine oxidase cloA. Paspalic acid is then further converted to D-lysergic acid. Ergovaline is assembled from D-lysergic acid and three different amino acids by the D-lysergyl-peptide-synthetase composed of a monomudular (lpsB) and a trimodular (lpsA) nonribosomal peptide synthetase subunit. This is FAD-linked oxidoreductase easE from Epichloe festucae var. lolii (Neotyphodium lolii).